The chain runs to 66 residues: MEQGTVKWFNAEKGFGFIERENGDDVFVHFSAIQSDGFKSLDEGQKVSFDVEQGARGAQAANVQKA.

A CSD domain is found at 4 to 63; the sequence is GTVKWFNAEKGFGFIERENGDDVFVHFSAIQSDGFKSLDEGQKVSFDVEQGARGAQAANV.

Its subcellular location is the cytoplasm. The sequence is that of Cold shock protein CspC (cspC) from Bacillus subtilis (strain 168).